The primary structure comprises 417 residues: Phosphoglycerate kinase (417 aa).

Substrate is bound by residues 24 to 26 (DLN), arginine 44, 67 to 70 (HLGR), arginine 126, and arginine 170. ATP contacts are provided by residues lysine 220, glycine 316, glutamate 347, and 373-376 (GGDS).

This sequence belongs to the phosphoglycerate kinase family. In terms of assembly, monomer.

Its subcellular location is the cytoplasm. It catalyses the reaction (2R)-3-phosphoglycerate + ATP = (2R)-3-phospho-glyceroyl phosphate + ADP. It participates in carbohydrate degradation; glycolysis; pyruvate from D-glyceraldehyde 3-phosphate: step 2/5. The protein is Phosphoglycerate kinase of Renibacterium salmoninarum (strain ATCC 33209 / DSM 20767 / JCM 11484 / NBRC 15589 / NCIMB 2235).